A 223-amino-acid chain; its full sequence is Adenylate kinase (223 aa).

10–15 serves as a coordination point for ATP; it reads GSGKGT. An NMP region spans residues 30–59; sequence ESGAIFREHIGGGTELGMKAKGYIDKGELV. Residues S31, R36, 57–59, 84–87, and Q91 contribute to the AMP site; these read ELV and GFPR. An LID region spans residues 125-164; the sequence is GRRLCANDPNHPNNIFIDAIKPNGDKCRVCGGDLKTRSDD. Residue R126 participates in ATP binding. AMP is bound by residues R161 and R173. Residue G209 participates in ATP binding.

It belongs to the adenylate kinase family. In terms of assembly, monomer.

Its subcellular location is the cytoplasm. The catalysed reaction is AMP + ATP = 2 ADP. It functions in the pathway purine metabolism; AMP biosynthesis via salvage pathway; AMP from ADP: step 1/1. Functionally, catalyzes the reversible transfer of the terminal phosphate group between ATP and AMP. Plays an important role in cellular energy homeostasis and in adenine nucleotide metabolism. This is Adenylate kinase from Solidesulfovibrio magneticus (strain ATCC 700980 / DSM 13731 / RS-1) (Desulfovibrio magneticus).